The following is a 431-amino-acid chain: CCA tRNA nucleotidyltransferase 1, mitochondrial (431 aa).

A mitochondrion-targeting transit peptide spans 1–31; that stretch reads MWAKLFLRPSFVNRVHLTWSCRALLTMQLKT. ATP contacts are provided by Gly-61 and Arg-64. The CTP site is built by Gly-61 and Arg-64. Asp-74 and Asp-76 together coordinate Mg(2+). 5 residues coordinate ATP: Arg-148, Asp-191, Arg-194, Arg-197, and Arg-200. CTP is bound by residues Arg-148, Asp-191, Arg-194, Arg-197, and Arg-200.

This sequence belongs to the tRNA nucleotidyltransferase/poly(A) polymerase family. Monomer, and homodimer. It depends on Mg(2+) as a cofactor. Expressed ubiquitously during early embryogenesis.

It localises to the mitochondrion. The protein localises to the cytoplasm. Its subcellular location is the nucleus. The catalysed reaction is a tRNA precursor + 2 CTP + ATP = a tRNA with a 3' CCA end + 3 diphosphate. It catalyses the reaction a tRNA with a 3' CCA end + 2 CTP + ATP = a tRNA with a 3' CCACCA end + 3 diphosphate. Nucleotidyltransferase that catalyzes the addition and repair of the essential 3'-terminal CCA sequence in tRNAs, which is necessary for the attachment of amino acids to the 3' terminus of tRNA molecules, using CTP and ATP as substrates. tRNA 3'-terminal CCA addition is required both for tRNA processing and repair. Promotes tRNA repair and recycling downstream of the ribosome-associated quality control (RQC) pathway by mediating addition of the tRNA 3'-terminal CCA following cleavage by ankzf1 and repair by elac1. Also involved in tRNA surveillance by mediating tandem CCA addition to generate a CCACCA at the 3' terminus of unstable tRNAs and tRNA-like transcripts. While stable tRNAs receive only 3'-terminal CCA, unstable tRNAs beginning with GG are marked with CCACCA and rapidly degraded. The structural flexibility of RNA controls the choice between CCA versus CCACCA addition: following the first CCA addition cycle, nucleotide-binding to the active site triggers a clockwise screw motion, producing torque on the RNA. This ejects stable RNAs, whereas unstable RNAs are refolded while bound to the enzyme and subjected to a second CCA catalytic cycle. The polypeptide is CCA tRNA nucleotidyltransferase 1, mitochondrial (Danio rerio (Zebrafish)).